The primary structure comprises 254 residues: Ribosomal RNA small subunit methyltransferase J (254 aa).

S-adenosyl-L-methionine contacts are provided by residues 107-108 (RD), 123-124 (ER), and aspartate 177.

The protein belongs to the methyltransferase superfamily. RsmJ family.

It is found in the cytoplasm. It carries out the reaction guanosine(1516) in 16S rRNA + S-adenosyl-L-methionine = N(2)-methylguanosine(1516) in 16S rRNA + S-adenosyl-L-homocysteine + H(+). In terms of biological role, specifically methylates the guanosine in position 1516 of 16S rRNA. The polypeptide is Ribosomal RNA small subunit methyltransferase J (Histophilus somni (strain 2336) (Haemophilus somnus)).